A 181-amino-acid polypeptide reads, in one-letter code: 3-hexulose-6-phosphate isomerase (181 aa).

An SIS domain is found at 27-168 (ILSLVDAAGR…IAKLVDQKGL (142 aa)). Residues serine 45 and 84–89 (SGSGST) each bind substrate. The active-site Proton acceptor is the glutamate 148.

This sequence belongs to the SIS family. PHI subfamily. In terms of assembly, homodimer.

It carries out the reaction D-arabino-hex-3-ulose 6-phosphate = beta-D-fructose 6-phosphate. The protein operates within one-carbon metabolism; formaldehyde assimilation via RuMP pathway; D-fructose 6-phosphate from D-ribulose 5-phosphate and formaldehyde: step 2/2. Functionally, catalyzes the isomerization between 3-hexulose 6-phosphate and fructose 6-phosphate. This chain is 3-hexulose-6-phosphate isomerase (rmpB), found in Methylomonas aminofaciens.